The sequence spans 766 residues: MGAAILPDLGTEILIPVCAVIGIAFALFQWLLVSKVKLSAVRDASPNAAAKNGYNDYLIEEEEGINDHNVVVKCAEIQNAISEGATSFLFTEYKYVGIFMVAFAILIFLFLGSVEGFSTSPQACSYDKTKTCKPALATAIFSTVSFLLGGVTSLVSGFLGMKIATYANARTTLEARKGVGKAFITAFRSGAVMGFLLAANGLLVLYIAINLFKIYYGDDWGGLFEAITGYGLGGSSMALFGRVGGGIYTKAADVGADLVGKVERNIPEDDPRNPAVIADNVGDNVGDIAGMGSDLFGSYAESSCAALVVASISSFGLNHELTAMLYPLIVSSVGILVCLLTTLFATDFFEIKAVKEIEPALKKQLVISTVLMTIGVAVVSFVALPTSFTIFNFGVQKDVKSWQLFLCVAVGLWAGLIIGFVTEYYTSNAYSPVQDVADSCRTGAATNVIFGLALGYKSVIIPIFAIAISIFVSFTFAAMYGIAVAALGMLSTIATGLAIDAYGPISDNAGGIAEMAGMSHRIRERTDALDAAGNTTAAIGKGFAIGSAALVSLALFGAFVSRASITTVDVLTPKVFIGLIVGAMLPYWFSAMTMKSVGSAALKMVEEVRRQFNTIPGLMEGTAKPDYATCVKISTDASIKEMIPPGALVMLTPLVVGILFGVETLSGVLAGSLVSGVQIAISASNTGGAWDNAKKYIEAGASEHARSLGPKGSDCHKAAVIGDTIGDPLKDTSGPSLNILIKLMAVESLVFAPFFATHGGLLFKIF.

Residues 2–8 (GAAILPD) lie on the Intravacuolar side of the membrane. The helical transmembrane segment at 9–35 (LGTEILIPVCAVIGIAFALFQWLLVSK) threads the bilayer. The Cytoplasmic segment spans residues 36–84 (VKLSAVRDASPNAAAKNGYNDYLIEEEEGINDHNVVVKCAEIQNAISEG). The chain crosses the membrane as a helical span at residues 85 to 114 (ATSFLFTEYKYVGIFMVAFAILIFLFLGSV). Topologically, residues 115-135 (EGFSTSPQACSYDKTKTCKPA) are intravacuolar. A disulfide bond links C124 and C132. Residues 136–163 (LATAIFSTVSFLLGGVTSLVSGFLGMKI) traverse the membrane as a helical segment. Topologically, residues 164 to 186 (ATYANARTTLEARKGVGKAFITA) are cytoplasmic. A helical transmembrane segment spans residues 187-216 (FRSGAVMGFLLAANGLLVLYIAINLFKIYY). Topologically, residues 217 to 219 (GDD) are intravacuolar. Residues 220 to 248 (WGGLFEAITGYGLGGSSMALFGRVGGGIY) form a helical membrane-spanning segment. Over 249 to 286 (TKAADVGADLVGKVERNIPEDDPRNPAVIADNVGDNVG) the chain is Cytoplasmic. Residue K250 coordinates substrate. Mg(2+)-binding residues include D253, D257, and D283. A helical membrane pass occupies residues 287-312 (DIAGMGSDLFGSYAESSCAALVVASI). The Intravacuolar segment spans residues 313–320 (SSFGLNHE). A helical transmembrane segment spans residues 321-346 (LTAMLYPLIVSSVGILVCLLTTLFAT). The Cytoplasmic segment spans residues 347–354 (DFFEIKAV). Residues 355–382 (KEIEPALKKQLVISTVLMTIGVAVVSFV) traverse the membrane as a helical segment. Over 383–401 (ALPTSFTIFNFGVQKDVKS) the chain is Intravacuolar. Residues 402–425 (WQLFLCVAVGLWAGLIIGFVTEYY) traverse the membrane as a helical segment. Over 426 to 447 (TSNAYSPVQDVADSCRTGAATN) the chain is Cytoplasmic. A helical membrane pass occupies residues 448–472 (VIFGLALGYKSVIIPIFAIAISIFV). Residues 473 to 478 (SFTFAA) lie on the Intravacuolar side of the membrane. Residues 479-505 (MYGIAVAALGMLSTIATGLAIDAYGPI) form a helical membrane-spanning segment. The Cytoplasmic portion of the chain corresponds to 506–534 (SDNAGGIAEMAGMSHRIRERTDALDAAGN). Residues D507 and N534 each coordinate Mg(2+). A helical transmembrane segment spans residues 535–563 (TTAAIGKGFAIGSAALVSLALFGAFVSRA). The Intravacuolar portion of the chain corresponds to 564-573 (SITTVDVLTP). Residues 574 to 602 (KVFIGLIVGAMLPYWFSAMTMKSVGSAAL) form a helical membrane-spanning segment. Over 603 to 631 (KMVEEVRRQFNTIPGLMEGTAKPDYATCV) the chain is Cytoplasmic. A helical transmembrane segment spans residues 632–660 (KISTDASIKEMIPPGALVMLTPLVVGILF). A topological domain (intravacuolar) is located at residue G661. The helical transmembrane segment at 662–689 (VETLSGVLAGSLVSGVQIAISASNTGGA) threads the bilayer. Residues 690 to 732 (WDNAKKYIEAGASEHARSLGPKGSDCHKAAVIGDTIGDPLKDT) are Cytoplasmic-facing. D691 and D727 together coordinate Mg(2+). K730 provides a ligand contact to substrate. The chain crosses the membrane as a helical span at residues 733-758 (SGPSLNILIKLMAVESLVFAPFFATH). Over 759 to 765 (GGLLFKI) the chain is Intravacuolar.

It belongs to the H(+)-translocating pyrophosphatase (TC 3.A.10) family. K(+)-stimulated subfamily. Homodimer.

Its subcellular location is the vacuole membrane. The enzyme catalyses diphosphate + H2O + H(+)(in) = 2 phosphate + 2 H(+)(out). Inhibited by excess pyrophosphate as well as excess Mg(2+). Inhibition by ATP, GTP, and CTP is reversed by increasing the Mg(2+) concentration. This suggests that the substrate is a particular metal complex such as MgPPi(2-). Modification of Asp-283 with DCCD abolishes pyrophosphatase activity. Proton-translocating inorganic pyrophosphatase that contributes to the transtonoplast (from cytosol to vacuole lumen) H(+)-electrochemical potential difference. It establishes a proton gradient of similar and often greater magnitude than the H(+)-ATPase on the same membrane. This chain is Pyrophosphate-energized vacuolar membrane proton pump, found in Vigna radiata var. radiata (Mung bean).